A 420-amino-acid polypeptide reads, in one-letter code: Tol-Pal system protein TolB (420 aa).

Residues 1-21 (MKLFVHLVLFISLFIPYFTKA) form the signal peptide.

Belongs to the TolB family. As to quaternary structure, the Tol-Pal system is composed of five core proteins: the inner membrane proteins TolA, TolQ and TolR, the periplasmic protein TolB and the outer membrane protein Pal. They form a network linking the inner and outer membranes and the peptidoglycan layer.

The protein localises to the periplasm. Functionally, part of the Tol-Pal system, which plays a role in outer membrane invagination during cell division and is important for maintaining outer membrane integrity. This is Tol-Pal system protein TolB from Wolbachia sp. subsp. Drosophila simulans (strain wRi).